Consider the following 395-residue polypeptide: Multidrug resistance protein MdtL (395 aa).

Transmembrane regions (helical) follow at residues 4–24 (FLLC…MYLV), 42–62 (IAFS…GKIA), 69–89 (PVAI…SRAS), 93–113 (LFLS…VVAF), 131–151 (LLNG…HLIM), 158–178 (SLFY…LFIL), 217–237 (VSVI…VMGF), 247–267 (ALTA…LGLF), 271–291 (TLML…SLAH), 295–315 (VTLF…GVAM), 328–350 (VASS…LAAI), and 355–377 (AMNM…IFSV).

It belongs to the major facilitator superfamily. DHA1 family. MdtL (TC 2.A.1.2.22) subfamily.

Its subcellular location is the cell inner membrane. The polypeptide is Multidrug resistance protein MdtL (Salmonella schwarzengrund (strain CVM19633)).